The primary structure comprises 33 residues: Photosystem II reaction center protein Psb30 (33 aa).

A helical membrane pass occupies residues 5–25 (VIAQLTMLTIAVITGPLVIFF).

The protein belongs to the Psb30/Ycf12 family. PSII is composed of 1 copy each of membrane proteins PsbA, PsbB, PsbC, PsbD, PsbE, PsbF, PsbH, PsbI, PsbJ, PsbK, PsbL, PsbM, PsbT, PsbX, PsbY, PsbZ, Psb30/Ycf12, peripheral proteins of the oxygen-evolving complex and a large number of cofactors. It forms dimeric complexes.

It localises to the plastid. The protein localises to the chloroplast thylakoid membrane. A core subunit of photosystem II (PSII), probably helps stabilize the reaction center. This Welwitschia mirabilis (Tree tumbo) protein is Photosystem II reaction center protein Psb30.